The sequence spans 263 residues: Small ribosomal subunit protein uS2 (263 aa).

At serine 2 the chain carries N-acetylserine. A compositionally biased stretch (acidic residues) spans 211 to 242 (EQTAEEEAEAAEGAEFEVEEEEVEQEWQEPAE). Residues 211–263 (EQTAEEEAEAAEGAEFEVEEEEVEQEWQEPAEADWNASAPPADWNDAANAEAF) form a disordered region. Over residues 246–263 (NASAPPADWNDAANAEAF) the composition is skewed to low complexity.

The protein belongs to the universal ribosomal protein uS2 family. As to quaternary structure, component of the small ribosomal subunit. Mature ribosomes consist of a small (40S) and a large (60S) subunit. The 40S subunit contains about 33 different proteins and 1 molecule of RNA (18S). The 60S subunit contains about 49 different proteins and 3 molecules of RNA (25S, 5.8S and 5S). Interacts with RPS21.

It is found in the cytoplasm. In terms of biological role, required for the assembly and/or stability of the 40S ribosomal subunit. Required for the processing of the 20S rRNA-precursor to mature 18S rRNA in a late step of the maturation of 40S ribosomal subunits. In Komagataella phaffii (strain GS115 / ATCC 20864) (Yeast), this protein is Small ribosomal subunit protein uS2.